We begin with the raw amino-acid sequence, 341 residues long: KH domain-containing RNA-binding protein QKI (341 aa).

The tract at residues 11–82 (PNPTPDYLMQ…PDAVGPIVQL (72 aa)) is qua1 domain; involved in homodimerization. The region spanning 87–153 (YVPVKEYPDF…WEHLNEDLHV (67 aa)) is the KH domain. Residues 182-213 (AAEGEDSLKKMQLMELAILNGTYRDANIKSPA) are qua2 domain; involved in RNA binding. The residue at position 188 (Ser-188) is a Phosphoserine. Arg-227 is modified (omega-N-methylarginine). Position 242 is an asymmetric dimethylarginine; by CARM1; alternate (Arg-242). Arg-242 carries the post-translational modification Omega-N-methylarginine; alternate. Arg-256 is subject to Omega-N-methylarginine. The SH3-binding signature appears at 276 to 279 (PPGP). Residues 324–330 (RVHPYQR) carry the Nuclear localization signal motif.

The protein belongs to the quaking family. As to quaternary structure, homodimer; does not require RNA to homodimerize. Able to heterodimerize with BICC1. In terms of processing, methylated by PRMT1. Tyrosine phosphorylated at its C-terminus, probably by FYN. Phosphorylation leads to decreased mRNA-binding affinity, affecting transport and/or stabilization of MBP mRNA. Post-translationally, ubiquitinated by RNF6 in macrophages, leading to its degradation. Present in myelinating oligodendrocytes (at protein level).

It is found in the nucleus. It localises to the cytoplasm. RNA reader protein, which recognizes and binds specific RNAs, thereby regulating RNA metabolic processes, such as pre-mRNA splicing, circular RNA (circRNA) formation, mRNA export, mRNA stability and/or translation. Involved in various cellular processes, such as mRNA storage into stress granules, apoptosis, lipid deposition, interferon response, glial cell fate and development. Binds to the 5'-NACUAAY-N(1,20)-UAAY-3' RNA core sequence. Acts as a mRNA modification reader that specifically recognizes and binds mRNA transcripts modified by internal N(7)-methylguanine (m7G). Promotes the formation of circular RNAs (circRNAs) during the epithelial to mesenchymal transition and in cardiomyocytes: acts by binding to sites flanking circRNA-forming exons. CircRNAs are produced by back-splicing circularization of pre-mRNAs. Plays a central role in myelinization via 3 distinct mechanisms. First, acts by protecting and promoting stability of target mRNAs such as MBP, SIRT2 and CDKN1B, which promotes oligodendrocyte differentiation. Second, participates in mRNA transport by regulating the nuclear export of MBP mRNA. Finally, indirectly regulates mRNA splicing of MAG pre-mRNA during oligodendrocyte differentiation by acting as a negative regulator of MAG exon 12 alternative splicing: acts by binding to HNRNPA1 mRNA splicing factor, preventing its translation. Involved in microglia differentiation and remyelination by regulating microexon alternative splicing of the Rho GTPase pathway. Involved in macrophage differentiation: promotes monocyte differentiation by regulating pre-mRNA splicing in naive peripheral blood monocytes. Acts as an important regulator of muscle development: required for the contractile function of cardiomyocytes by regulating alternative splicing of cardiomyocyte transcripts. Acts as a negative regulator of thermogenesis by decreasing stability, nuclear export and translation of mRNAs encoding PPARGC1A and UCP1. Also required for visceral endoderm function and blood vessel development. May also play a role in smooth muscle development. In addition to its RNA-binding activity, also acts as a nuclear transcription coactivator for SREBF2/SREBP2. This Rattus norvegicus (Rat) protein is KH domain-containing RNA-binding protein QKI.